Consider the following 663-residue polypeptide: Protein associated with UVRAG as autophagy enhancer (663 aa).

2 disordered regions span residues M1–E36 and D65–A136. 2 stretches are compositionally biased toward polar residues: residues T80–L93 and P105–T130. The tract at residues E196–E235 is interaction with UVRAG. Residues K484, K534, K574, and K634 each carry the N6-acetyllysine modification.

As to quaternary structure, interacts with UVRAG; the interaction is direct and promotes association with the PI3K/PI3KC3 and HOPS complexes. Interacts with STX17. In terms of processing, acetylated by KAT5/TIP60 under autophagy induction, promoting autophagosome maturation and lipid metabolism. Lys-484 and Lys-574 constitute the key sites for tuning function in autophagy.

Its subcellular location is the cytoplasmic vesicle. The protein localises to the autophagosome membrane. Functionally, regulator of autophagy that promotes autophagosome maturation by facilitating the biogenesis of phosphatidylinositol 3-phosphate (PtdIns(3)P) in late steps of autophagy. Acts by antagonizing RUBCN, thereby stimulating phosphatidylinositol 3-kinase activity of the PI3K/PI3KC3 complex. Following anchorage to the autophagosomal SNARE STX17, promotes the recruitment of PI3K/PI3KC3 and HOPS complexes to the autophagosome to regulate the fusion specificity of autophagosomes with late endosomes/lysosomes. Binds phosphoinositides phosphatidylinositol 3-phosphate (PtdIns(3)P), 4-phosphate (PtdIns(4)P) and 5-phosphate (PtdIns(5)P). In addition to its role in autophagy, acts as a regulator of lipid and glycogen homeostasis. May act as a tumor suppressor. The protein is Protein associated with UVRAG as autophagy enhancer of Bos taurus (Bovine).